A 510-amino-acid chain; its full sequence is NAD(P)H-quinone oxidoreductase subunit 2 A, chloroplastic (510 aa).

Transmembrane regions (helical) follow at residues 24-44, 57-77, 99-119, 124-144, 149-169, 183-203, 227-247, 295-315, 323-343, 354-374, 395-415, 418-438, and 484-504; these read LLLF…GLIL, IPWL…ALLF, IFQF…VEYI, MAIT…MFLC, LITI…LSGY, YLLM…WLYG, PGIS…LSPA, WHLL…LIAI, MLAY…IVGD, YMLF…LFGL, ALSL…AGFF, LYLF…IGLL, and MIVC…IIAI.

Belongs to the complex I subunit 2 family. In terms of assembly, NDH is composed of at least 16 different subunits, 5 of which are encoded in the nucleus.

The protein localises to the plastid. It localises to the chloroplast thylakoid membrane. It carries out the reaction a plastoquinone + NADH + (n+1) H(+)(in) = a plastoquinol + NAD(+) + n H(+)(out). It catalyses the reaction a plastoquinone + NADPH + (n+1) H(+)(in) = a plastoquinol + NADP(+) + n H(+)(out). NDH shuttles electrons from NAD(P)H:plastoquinone, via FMN and iron-sulfur (Fe-S) centers, to quinones in the photosynthetic chain and possibly in a chloroplast respiratory chain. The immediate electron acceptor for the enzyme in this species is believed to be plastoquinone. Couples the redox reaction to proton translocation, and thus conserves the redox energy in a proton gradient. This chain is NAD(P)H-quinone oxidoreductase subunit 2 A, chloroplastic, found in Solanum tuberosum (Potato).